The chain runs to 120 residues: Small ribosomal subunit protein uS17 (120 aa).

Positions Met-1–Gly-22 are enriched in low complexity. A disordered region spans residues Met-1–Ile-46.

This sequence belongs to the universal ribosomal protein uS17 family. In terms of assembly, part of the 30S ribosomal subunit.

Functionally, one of the primary rRNA binding proteins, it binds specifically to the 5'-end of 16S ribosomal RNA. The polypeptide is Small ribosomal subunit protein uS17 (Mycobacterium ulcerans (strain Agy99)).